Here is a 37-residue protein sequence, read N- to C-terminus: Large ribosomal subunit protein bL36c (37 aa).

The protein belongs to the bacterial ribosomal protein bL36 family.

Its subcellular location is the plastid. The protein resides in the chloroplast. In Pisum sativum (Garden pea), this protein is Large ribosomal subunit protein bL36c (rpl36).